The chain runs to 328 residues: Tetraacyldisaccharide 4'-kinase (328 aa).

59-66 contributes to the ATP binding site; it reads TAGGNGKT.

Belongs to the LpxK family.

The catalysed reaction is a lipid A disaccharide + ATP = a lipid IVA + ADP + H(+). It functions in the pathway glycolipid biosynthesis; lipid IV(A) biosynthesis; lipid IV(A) from (3R)-3-hydroxytetradecanoyl-[acyl-carrier-protein] and UDP-N-acetyl-alpha-D-glucosamine: step 6/6. Functionally, transfers the gamma-phosphate of ATP to the 4'-position of a tetraacyldisaccharide 1-phosphate intermediate (termed DS-1-P) to form tetraacyldisaccharide 1,4'-bis-phosphate (lipid IVA). The polypeptide is Tetraacyldisaccharide 4'-kinase (Aliivibrio fischeri (strain MJ11) (Vibrio fischeri)).